The primary structure comprises 517 residues: Protein IQ-DOMAIN 13 (517 aa).

A calmodulin-binding region spans residues 1–11 (MGKKGSWFSAI). 2 disordered regions span residues 1-60 (MGKK…FLPI) and 81-147 (VFRP…PRAV). A compositionally biased stretch (basic residues) spans 40–49 (KKKKGFGKKL). Polar residues predominate over residues 89-99 (DRANSSSTSVA). A compositionally biased stretch (pro residues) spans 134–144 (PKPPSPKPPSP). IQ domains follow at residues 168–196 (KNAY…GLVR) and 197–218 (LQGV…KYMQ). Disordered stretches follow at residues 324 to 407 (QPFR…LTSC) and 425 to 452 (KLRA…SSFP). Residues 328–342 (LTPTRPSLSPQPQSS) are compositionally biased toward low complexity. Positions 343–367 (NQNHFRLNNSFDTSTPNSSKSTFVT) are enriched in polar residues. Residues 432 to 448 (PKERMDRTPVSTNEKRR) show a composition bias toward basic and acidic residues.

Belongs to the IQD family. Binds to multiple calmodulin (CaM) in the presence of Ca(2+) and CaM-like proteins. Expressed in vessels of roots, cotyledons and leaves, as well as in trichomes.

It localises to the cell membrane. It is found in the cytoplasm. Its subcellular location is the cytoskeleton. May be involved in cooperative interactions with calmodulins or calmodulin-like proteins. Recruits calmodulin proteins to microtubules, thus being a potential scaffold in cellular signaling and trafficking. Regulates the formation of oval xylem secondary cell-wall deposition pits through microtubule-dependent lateral inhibition of Rho GTPase domains, thus confining the area of active ROP domains within the lattice of the cortical microtubules. May associate with nucleic acids and regulate gene expression at the transcriptional or post-transcriptional level. The protein is Protein IQ-DOMAIN 13 of Arabidopsis thaliana (Mouse-ear cress).